The following is a 930-amino-acid chain: Protocadherin gamma-A4 (930 aa).

An N-terminal signal peptide occupies residues 1–27 (MAAPYKSDRRGLIWICIFLGSLCDIRA). Cadherin domains are found at residues 28-132 (EQIR…APSF), 133-241 (GAQQ…APVF), 242-346 (TQPE…APEV), 347-451 (TVTS…PPTF), 452-561 (THAS…TPEI), and 569-682 (DGST…APID). Topologically, residues 28–691 (EQIRYSVPEE…DQEDSDITLY (664 aa)) are extracellular. 2 N-linked (GlcNAc...) asparagine glycosylation sites follow: asparagine 418 and asparagine 544. Residues 692 to 712 (LVVAVAAVSCVFLAFVIVLLI) traverse the membrane as a helical segment. The Cytoplasmic segment spans residues 713 to 930 (HRLRRWHSTR…KKKSGKKEKK (218 aa)). Disordered regions lie at residues 803–839 (SSLQ…WPNN) and 900–930 (ATLT…KEKK). Residues 920–930 (NKKKSGKKEKK) are compositionally biased toward basic residues.

The protein resides in the cell membrane. In terms of biological role, potential calcium-dependent cell-adhesion protein. May be involved in the establishment and maintenance of specific neuronal connections in the brain. This Mus musculus (Mouse) protein is Protocadherin gamma-A4.